We begin with the raw amino-acid sequence, 36 residues long: Egg-laying-like hormone (36 aa).

Residue lysine 36 is modified to Lysine amide.

Supra, subesophageal ganglia and segmental ganglia of the ventral nerve cord and brain.

May be involved in leech reproduction. The polypeptide is Egg-laying-like hormone (Theromyzon tessulatum (Duck leech)).